The primary structure comprises 548 residues: MHPDDDPYADDGSGRLFWADAAADRVLDGDPEEPIVIKGGISPSGVPHLGNMNEIMRGYFVAAVLRERGHEVRQVFTSDDRDPLRGLPRKLADLDGEVVALGDVNAGALGQNLGAPYTEIPDPFGCCDSYGAHFSNLIQSSADRLGVDVEMVSNTETYANGGFEEVTRYLLEHVTAARDVLGEYQDKVDEEYVPFNPICEACGKVTETVTDVDADAGTVEYVCTDMDAGDQTIEGCGHEGTATLREGKLPWRFEWPAQWRTLGVDYEPFGKDHAEGSWPSGTDISRNVLGDEPPTPMVYEWFTLDGEPFSSSAGHVILVQDVLALLELPVVRYFFSKDPRRARDFSIEHLDQLVDEFDRMERVYFGEAADASEDERERAARVYPLLVDDIDADRVRIPFTFAAVLGMTEDSALREEIARREGHIPADADADTVADALTRVERAREWARRTNNEFNYRLARAEIPAHDFDDATAAALDELAAFLDDEDPDGEALQGEIYEAAKRHDIDIGAFFAAGYRLFFDEDQGPKLGPFLAKLDREFVVTRLRREG.

Positions 43–51 match the 'HIGH' region motif; sequence PSGVPHLGN. Positions 308 to 312 match the 'KMSKS' region motif; that stretch reads PFSSS.

This sequence belongs to the class-I aminoacyl-tRNA synthetase family.

Its subcellular location is the cytoplasm. The catalysed reaction is tRNA(Lys) + L-lysine + ATP = L-lysyl-tRNA(Lys) + AMP + diphosphate. This is Lysine--tRNA ligase from Halobacterium salinarum (strain ATCC 700922 / JCM 11081 / NRC-1) (Halobacterium halobium).